Reading from the N-terminus, the 206-residue chain is RNA pyrophosphohydrolase (206 aa).

The Nudix hydrolase domain maps to 6–149; it reads GYRPNVGIVL…KRGVYARALR (144 aa). The Nudix box signature appears at 38 to 59; the sequence is GGMNTDETPVEAMYRELQEETG. The disordered stretch occupies residues 175 to 206; that stretch reads MPGHTAGHDRPRKRPRSRGYWPKKAQGDVPPT.

This sequence belongs to the Nudix hydrolase family. RppH subfamily. It depends on a divalent metal cation as a cofactor.

In terms of biological role, accelerates the degradation of transcripts by removing pyrophosphate from the 5'-end of triphosphorylated RNA, leading to a more labile monophosphorylated state that can stimulate subsequent ribonuclease cleavage. This is RNA pyrophosphohydrolase from Stenotrophomonas maltophilia (strain R551-3).